Here is a 1608-residue protein sequence, read N- to C-terminus: Adenylate cyclase type 10 (1608 aa).

Guanylate cyclase domains lie at 42-179 (VLMF…RLAQ) and 293-418 (TIVF…ARMM). Positions 47 and 48 each coordinate Mg(2+). 47-52 (DISGFT) provides a ligand contact to ATP. K95 provides a ligand contact to hydrogencarbonate. D99 provides a ligand contact to Mg(2+). ATP contacts are provided by D99 and K144. Hydrogencarbonate-binding residues include V167, R176, and M337. ATP contacts are provided by residues V406 and 412–416 (NIAAR).

Belongs to the adenylyl cyclase class-4/guanylyl cyclase family. Mg(2+) serves as cofactor. Mn(2+) is required as a cofactor. In terms of processing, cleavage may occur to generate the active 48 kDa form. Detected in testis (at protein level). Preferentially expressed in testis.

The protein resides in the cell membrane. Its subcellular location is the cytoplasm. It localises to the cytoskeleton. It is found in the perinuclear region. The protein localises to the nucleus. The protein resides in the cell projection. Its subcellular location is the cilium. It localises to the mitochondrion. It catalyses the reaction ATP = 3',5'-cyclic AMP + diphosphate. With respect to regulation, activated by manganese or magnesium ions. In the presence of magnesium ions, the enzyme is activated by bicarbonate. Calcium mildly increases the enzyme activity, also in the presence of magnesium ions. Catalyzes the formation of the signaling molecule cAMP. May function as sensor that mediates responses to changes in cellular bicarbonate and CO(2) levels. Has a critical role in mammalian spermatogenesis by producing the cAMP which regulates cAMP-responsive nuclear factors indispensable for sperm maturation in the epididymis. Induces capacitation, the maturational process that sperm undergo prior to fertilization. Involved in ciliary beat regulation. The polypeptide is Adenylate cyclase type 10 (Adcy10) (Rattus norvegicus (Rat)).